A 587-amino-acid chain; its full sequence is ATF/CREB activator 2 (587 aa).

Disordered regions lie at residues 1 to 62 (MFTG…SRSL), 123 to 144 (LRQQ…EEES), 169 to 195 (NLSQ…SNIA), and 381 to 423 (TGGE…IPGT). The span at 16 to 29 (KQKDNNKRGIDDTS) shows a compositional bias: basic and acidic residues. Low complexity-rich tracts occupy residues 39 to 57 (SVSD…NNSA) and 123 to 134 (LRQQQQQDQRQQ). Phosphoserine is present on residues Ser171 and Ser179. Residues 385 to 395 (NRGKSALRESH) show a composition bias toward basic and acidic residues. Polar residues predominate over residues 396–418 (SNPSFTPKSQGSHLNLAANTQGN). Position 399 is a phosphoserine (Ser399). Positions 425-488 (AWKRARLLER…SKFKKFSKIH (64 aa)) constitute a bZIP domain. The interval 427–447 (KRARLLERNRIAASKCRQRKK) is basic motif. A leucine-zipper region spans residues 453–467 (LQKEFNEIKDENRIL). The segment at 552 to 587 (SQRFGSDTDDDDIDLKPVEGGKDPDNQSLPNSEKIK) is disordered. A Phosphoserine modification is found at Ser557. Thr559 bears the Phosphothreonine mark. Positions 565-576 (DLKPVEGGKDPD) are enriched in basic and acidic residues. Residues 577 to 587 (NQSLPNSEKIK) show a composition bias toward polar residues.

It belongs to the bZIP family.

The protein resides in the nucleus. Transcriptional activator of promoters containing ATF/CREB sites. Can independently stimulate transcription through ATF/CREB sites. Important for a variety of biological functions including growth on non-optimal carbon sources. The sequence is that of ATF/CREB activator 2 (CST6) from Saccharomyces cerevisiae (strain ATCC 204508 / S288c) (Baker's yeast).